Here is a 1084-residue protein sequence, read N- to C-terminus: Carbamoyl phosphate synthase large chain (1084 aa).

A carboxyphosphate synthetic domain region spans residues 1–401 (MPRRQDVEKV…ALLKAVRSLE (401 aa)). Positions 129, 169, 175, 176, 208, 210, 215, 241, 242, 243, 284, and 298 each coordinate ATP. Residues 133–327 (RALMKEIGEP…IAKVAAKIAV (195 aa)) form the ATP-grasp 1 domain. Residues Gln-284, Glu-298, and Asn-300 each contribute to the Mg(2+) site. Mn(2+) contacts are provided by Gln-284, Glu-298, and Asn-300. Residues 402 to 546 (TGRDGLFHPA…YSCYDEENEA (145 aa)) form an oligomerization domain region. The tract at residues 547–947 (VSPPGRKAVV…ALYKALLASG (401 aa)) is carbamoyl phosphate synthetic domain. The region spanning 672-862 (DQLLSDLSIP…LAKVATQVIA (191 aa)) is the ATP-grasp 2 domain. ATP-binding residues include Arg-708, Arg-747, Glu-753, Gly-778, Val-779, His-780, Ser-781, Gln-821, and Glu-833. Mg(2+) is bound by residues Gln-821, Glu-833, and Asn-835. Residues Gln-821, Glu-833, and Asn-835 each contribute to the Mn(2+) site. Residues 948–1084 (VRVPHRGTVL…VGISAVQDWV (137 aa)) form the MGS-like domain. An allosteric domain region spans residues 948-1084 (VRVPHRGTVL…VGISAVQDWV (137 aa)).

This sequence belongs to the CarB family. Composed of two chains; the small (or glutamine) chain promotes the hydrolysis of glutamine to ammonia, which is used by the large (or ammonia) chain to synthesize carbamoyl phosphate. Tetramer of heterodimers (alpha,beta)4. Mg(2+) serves as cofactor. Requires Mn(2+) as cofactor.

It catalyses the reaction hydrogencarbonate + L-glutamine + 2 ATP + H2O = carbamoyl phosphate + L-glutamate + 2 ADP + phosphate + 2 H(+). The catalysed reaction is hydrogencarbonate + NH4(+) + 2 ATP = carbamoyl phosphate + 2 ADP + phosphate + 2 H(+). The protein operates within amino-acid biosynthesis; L-arginine biosynthesis; carbamoyl phosphate from bicarbonate: step 1/1. It functions in the pathway pyrimidine metabolism; UMP biosynthesis via de novo pathway; (S)-dihydroorotate from bicarbonate: step 1/3. Large subunit of the glutamine-dependent carbamoyl phosphate synthetase (CPSase). CPSase catalyzes the formation of carbamoyl phosphate from the ammonia moiety of glutamine, carbonate, and phosphate donated by ATP, constituting the first step of 2 biosynthetic pathways, one leading to arginine and/or urea and the other to pyrimidine nucleotides. The large subunit (synthetase) binds the substrates ammonia (free or transferred from glutamine from the small subunit), hydrogencarbonate and ATP and carries out an ATP-coupled ligase reaction, activating hydrogencarbonate by forming carboxy phosphate which reacts with ammonia to form carbamoyl phosphate. The sequence is that of Carbamoyl phosphate synthase large chain from Symbiobacterium thermophilum (strain DSM 24528 / JCM 14929 / IAM 14863 / T).